Consider the following 142-residue polypeptide: Hemoglobin subunit alpha-A (142 aa).

One can recognise a Globin domain in the interval 2–142 (VLSAADKTNV…VGAVLTAKYR (141 aa)). H59 lines the O2 pocket. Position 88 (H88) interacts with heme b.

This sequence belongs to the globin family. In terms of assembly, heterotetramer of two alpha chains and two beta chains. In terms of tissue distribution, red blood cells.

Functionally, involved in oxygen transport from the lung to the various peripheral tissues. The polypeptide is Hemoglobin subunit alpha-A (HBAA) (Mareca penelope (Eurasian wigeon)).